Reading from the N-terminus, the 542-residue chain is CTP synthase (542 aa).

The tract at residues 1–265 is amidoligase domain; that stretch reads MARYIFITGG…DSEVLCAFGI (265 aa). Ser-13 is a binding site for CTP. Ser-13 contributes to the UTP binding site. Residue 14 to 19 participates in ATP binding; that stretch reads SLGKGI. Position 54 (Tyr-54) interacts with L-glutamine. Residue Asp-71 participates in ATP binding. Mg(2+) contacts are provided by Asp-71 and Glu-139. Residues 146–148, 186–191, and Lys-222 each bind CTP; these read DIE and KTKPTQ. UTP contacts are provided by residues 186–191 and Lys-222; that span reads KTKPTQ. One can recognise a Glutamine amidotransferase type-1 domain in the interval 291–541; sequence TIAVVGKYTG…IEATVEQSRL (251 aa). Ala-353 is an L-glutamine binding site. Cys-380 acts as the Nucleophile; for glutamine hydrolysis in catalysis. L-glutamine contacts are provided by residues 381–384, Glu-404, and Arg-469; that span reads FGMQ. Active-site residues include His-514 and Glu-516.

The protein belongs to the CTP synthase family. Homotetramer.

The enzyme catalyses UTP + L-glutamine + ATP + H2O = CTP + L-glutamate + ADP + phosphate + 2 H(+). It carries out the reaction L-glutamine + H2O = L-glutamate + NH4(+). It catalyses the reaction UTP + NH4(+) + ATP = CTP + ADP + phosphate + 2 H(+). Its pathway is pyrimidine metabolism; CTP biosynthesis via de novo pathway; CTP from UDP: step 2/2. With respect to regulation, allosterically activated by GTP, when glutamine is the substrate; GTP has no effect on the reaction when ammonia is the substrate. The allosteric effector GTP functions by stabilizing the protein conformation that binds the tetrahedral intermediate(s) formed during glutamine hydrolysis. Inhibited by the product CTP, via allosteric rather than competitive inhibition. Functionally, catalyzes the ATP-dependent amination of UTP to CTP with either L-glutamine or ammonia as the source of nitrogen. Regulates intracellular CTP levels through interactions with the four ribonucleotide triphosphates. The polypeptide is CTP synthase (Bartonella quintana (strain Toulouse) (Rochalimaea quintana)).